The following is a 140-amino-acid chain: Large ribosomal subunit protein bL17 (140 aa).

Belongs to the bacterial ribosomal protein bL17 family. In terms of assembly, part of the 50S ribosomal subunit. Contacts protein L32.

This is Large ribosomal subunit protein bL17 from Rhizobium rhizogenes (strain K84 / ATCC BAA-868) (Agrobacterium radiobacter).